Consider the following 436-residue polypeptide: Homeobox protein PKNOX1 (436 aa).

Residues 23-50 (ELKTEQDPNCSDPDAEGVSPPPIESQTP) form a disordered region. 2 positions are modified to phosphoserine: Ser-33 and Ser-41. Positions 80-163 (GSEGTTSASF…MNSETLLSGE (84 aa)) constitute an MEIS N-terminal domain. The segment at residues 259 to 321 (SKNKRGVLPK…NARRRILQPM (63 aa)) is a DNA-binding region (homeobox; TALE-type). A disordered region spans residues 401–436 (AGQSEDESVDSTEDEGGALAPTHISGLVLENSDSLQ). Positions 404 to 416 (SEDESVDSTEDEG) are enriched in acidic residues.

This sequence belongs to the TALE/MEIS homeobox family. Interacts with MN1.

The protein localises to the nucleus. Its function is as follows. Activates transcription in the presence of PBX1A and HOXA1. (Microbial infection) In complex with PBX1, binds to the 5'-TGATTGAC-3' consensus sequence in the U5 region of Moloney murine leukemia virus and promotes viral transcription. The chain is Homeobox protein PKNOX1 from Mus musculus (Mouse).